Here is a 1497-residue protein sequence, read N- to C-terminus: DNA-directed RNA polymerase subunit beta' (1497 aa).

Cys67, Cys69, Cys82, and Cys85 together coordinate Zn(2+). Residues Asp499, Asp501, and Asp503 each coordinate Mg(2+). The Zn(2+) site is built by Cys867, Cys943, Cys950, and Cys953. Residues 1476 to 1497 form a disordered region; it reads ESNATERVVEEPATREGFANER. The span at 1482 to 1497 shows a compositional bias: basic and acidic residues; it reads RVVEEPATREGFANER.

This sequence belongs to the RNA polymerase beta' chain family. As to quaternary structure, the RNAP catalytic core consists of 2 alpha, 1 beta, 1 beta' and 1 omega subunit. When a sigma factor is associated with the core the holoenzyme is formed, which can initiate transcription. Requires Mg(2+) as cofactor. Zn(2+) is required as a cofactor.

It catalyses the reaction RNA(n) + a ribonucleoside 5'-triphosphate = RNA(n+1) + diphosphate. In terms of biological role, DNA-dependent RNA polymerase catalyzes the transcription of DNA into RNA using the four ribonucleoside triphosphates as substrates. This chain is DNA-directed RNA polymerase subunit beta', found in Pelodictyon phaeoclathratiforme (strain DSM 5477 / BU-1).